The following is a 479-amino-acid chain: Poly(A) polymerase catalytic subunit (479 aa).

Catalysis depends on residues Asp202 and Asp204. Asp202, Asp204, and Asp253 together coordinate Ca(2+).

The protein belongs to the poxviridae poly(A) polymerase catalytic subunit family. As to quaternary structure, heterodimer of a large (catalytic) subunit and a small (regulatory) subunit.

It catalyses the reaction RNA(n) + ATP = RNA(n)-3'-adenine ribonucleotide + diphosphate. Functionally, polymerase that creates the 3'-poly(A) tail of mRNA's. This Mus musculus (Mouse) protein is Poly(A) polymerase catalytic subunit (OPG063).